A 377-amino-acid polypeptide reads, in one-letter code: Phosphoserine aminotransferase (377 aa).

Position 43 (R43) interacts with L-glutamate. Positions 105, 164, 189, and 212 each coordinate pyridoxal 5'-phosphate. Residue K213 is modified to N6-(pyridoxal phosphate)lysine. A pyridoxal 5'-phosphate-binding site is contributed by 254 to 255 (NT).

Belongs to the class-V pyridoxal-phosphate-dependent aminotransferase family. SerC subfamily. Homodimer. Pyridoxal 5'-phosphate is required as a cofactor.

It is found in the cytoplasm. It catalyses the reaction O-phospho-L-serine + 2-oxoglutarate = 3-phosphooxypyruvate + L-glutamate. The catalysed reaction is 4-(phosphooxy)-L-threonine + 2-oxoglutarate = (R)-3-hydroxy-2-oxo-4-phosphooxybutanoate + L-glutamate. It participates in amino-acid biosynthesis; L-serine biosynthesis; L-serine from 3-phospho-D-glycerate: step 2/3. Its pathway is cofactor biosynthesis; pyridoxine 5'-phosphate biosynthesis; pyridoxine 5'-phosphate from D-erythrose 4-phosphate: step 3/5. Functionally, catalyzes the reversible conversion of 3-phosphohydroxypyruvate to phosphoserine and of 3-hydroxy-2-oxo-4-phosphonooxybutanoate to phosphohydroxythreonine. In Bordetella pertussis (strain Tohama I / ATCC BAA-589 / NCTC 13251), this protein is Phosphoserine aminotransferase.